The following is a 517-amino-acid chain: Beta-glucosidase 17 (517 aa).

The N-terminal stretch at 1-23 (MAIKSIFIIIIISIITSISELYA) is a signal peptide. A beta-D-glucoside is bound by residues Q54, H158, and 203 to 204 (NE). E204 (proton donor) is an active-site residue. A disulfide bridge links C223 with C230. Residue N229 is glycosylated (N-linked (GlcNAc...) asparagine). Y346 lines the a beta-D-glucoside pocket. Residues N361 and N371 are each glycosylated (N-linked (GlcNAc...) asparagine). Residues E417, W466, 473–474 (EW), and Y482 each bind a beta-D-glucoside. The active-site Nucleophile is E417. N510 is a glycosylation site (N-linked (GlcNAc...) asparagine).

This sequence belongs to the glycosyl hydrolase 1 family.

The enzyme catalyses Hydrolysis of terminal, non-reducing beta-D-glucosyl residues with release of beta-D-glucose.. This Arabidopsis thaliana (Mouse-ear cress) protein is Beta-glucosidase 17.